We begin with the raw amino-acid sequence, 83 residues long: Cytochrome b559 subunit alpha (83 aa).

A helical membrane pass occupies residues 21 to 35 (VIHSITIPSLFIAGW). H23 is a heme binding site.

It belongs to the PsbE/PsbF family. As to quaternary structure, heterodimer of an alpha subunit and a beta subunit. PSII is composed of 1 copy each of membrane proteins PsbA, PsbB, PsbC, PsbD, PsbE, PsbF, PsbH, PsbI, PsbJ, PsbK, PsbL, PsbM, PsbT, PsbX, PsbY, PsbZ, Psb30/Ycf12, at least 3 peripheral proteins of the oxygen-evolving complex and a large number of cofactors. It forms dimeric complexes. Heme b is required as a cofactor.

The protein resides in the plastid. The protein localises to the chloroplast thylakoid membrane. This b-type cytochrome is tightly associated with the reaction center of photosystem II (PSII). PSII is a light-driven water:plastoquinone oxidoreductase that uses light energy to abstract electrons from H(2)O, generating O(2) and a proton gradient subsequently used for ATP formation. It consists of a core antenna complex that captures photons, and an electron transfer chain that converts photonic excitation into a charge separation. This Zygnema circumcarinatum (Green alga) protein is Cytochrome b559 subunit alpha.